The primary structure comprises 384 residues: Queuine tRNA-ribosyltransferase (384 aa).

Residue aspartate 92 is the Proton acceptor of the active site. Substrate contacts are provided by residues 92–96, aspartate 146, glutamine 190, and glycine 217; that span reads DSGGF. Residues 248–254 form an RNA binding region; it reads GVGRPED. Aspartate 267 serves as the catalytic Nucleophile. Residues 272–276 form an RNA binding; important for wobble base 34 recognition region; the sequence is TRHAR. 4 residues coordinate Zn(2+): cysteine 305, cysteine 307, cysteine 310, and histidine 337.

It belongs to the queuine tRNA-ribosyltransferase family. Homodimer. Within each dimer, one monomer is responsible for RNA recognition and catalysis, while the other monomer binds to the replacement base PreQ1. Zn(2+) is required as a cofactor.

The catalysed reaction is 7-aminomethyl-7-carbaguanine + guanosine(34) in tRNA = 7-aminomethyl-7-carbaguanosine(34) in tRNA + guanine. Its pathway is tRNA modification; tRNA-queuosine biosynthesis. Its function is as follows. Catalyzes the base-exchange of a guanine (G) residue with the queuine precursor 7-aminomethyl-7-deazaguanine (PreQ1) at position 34 (anticodon wobble position) in tRNAs with GU(N) anticodons (tRNA-Asp, -Asn, -His and -Tyr). Catalysis occurs through a double-displacement mechanism. The nucleophile active site attacks the C1' of nucleotide 34 to detach the guanine base from the RNA, forming a covalent enzyme-RNA intermediate. The proton acceptor active site deprotonates the incoming PreQ1, allowing a nucleophilic attack on the C1' of the ribose to form the product. After dissociation, two additional enzymatic reactions on the tRNA convert PreQ1 to queuine (Q), resulting in the hypermodified nucleoside queuosine (7-(((4,5-cis-dihydroxy-2-cyclopenten-1-yl)amino)methyl)-7-deazaguanosine). The protein is Queuine tRNA-ribosyltransferase of Xylella fastidiosa (strain 9a5c).